Reading from the N-terminus, the 42-residue chain is Phospholipase A1 (42 aa).

Belongs to the AB hydrolase superfamily. Lipase family. Contains six disulfide bonds. As to expression, expressed by the venom gland.

The protein localises to the secreted. The catalysed reaction is a 1,2-diacyl-sn-glycero-3-phosphocholine + H2O = a 2-acyl-sn-glycero-3-phosphocholine + a fatty acid + H(+). Its function is as follows. Catalyzes the hydrolysis of phosphatidylcholine with phospholipase A1 activity. May act as an allergen and induce hemolytic activity. This chain is Phospholipase A1, found in Polistes gallicus (Paper wasp).